Reading from the N-terminus, the 191-residue chain is Adenylate kinase (191 aa).

ATP is bound at residue 12 to 17 (GSGKTT). The interval 34 to 63 (STGDLLRAESAKKTERGLLIEKFTSQGELV) is NMP. Residues Thr35, Arg40, 61–63 (ELV), 88–91 (GYPR), and Gln95 each bind AMP. Residues 130–136 (GRSRGAD) are LID. Position 131 (Arg131) interacts with ATP. Arg133 and Arg145 together coordinate AMP. Arg173 contacts ATP.

This sequence belongs to the adenylate kinase family. As to quaternary structure, monomer.

The protein localises to the cytoplasm. It catalyses the reaction AMP + ATP = 2 ADP. It participates in purine metabolism; AMP biosynthesis via salvage pathway; AMP from ADP: step 1/1. In terms of biological role, catalyzes the reversible transfer of the terminal phosphate group between ATP and AMP. Plays an important role in cellular energy homeostasis and in adenine nucleotide metabolism. The polypeptide is Adenylate kinase (Helicobacter pylori (strain HPAG1)).